Here is a 457-residue protein sequence, read N- to C-terminus: Ribosomal protein uS12 methylthiotransferase RimO (457 aa).

One can recognise an MTTase N-terminal domain in the interval 9-128 (KKVHFISLGC…ILKNSDEGEK (120 aa)). [4Fe-4S] cluster-binding residues include C18, C54, C88, C163, C167, and C170. In terms of domain architecture, Radical SAM core spans 149–384 (SQPGHRAYLK…MEVQQNISRE (236 aa)). The TRAM domain occupies 387 to 455 (SDFVGKTLQV…EYDLIGEIVV (69 aa)).

Belongs to the methylthiotransferase family. RimO subfamily. Requires [4Fe-4S] cluster as cofactor.

The protein resides in the cytoplasm. The catalysed reaction is L-aspartate(89)-[ribosomal protein uS12]-hydrogen + (sulfur carrier)-SH + AH2 + 2 S-adenosyl-L-methionine = 3-methylsulfanyl-L-aspartate(89)-[ribosomal protein uS12]-hydrogen + (sulfur carrier)-H + 5'-deoxyadenosine + L-methionine + A + S-adenosyl-L-homocysteine + 2 H(+). Catalyzes the methylthiolation of an aspartic acid residue of ribosomal protein uS12. The sequence is that of Ribosomal protein uS12 methylthiotransferase RimO from Bdellovibrio bacteriovorus (strain ATCC 15356 / DSM 50701 / NCIMB 9529 / HD100).